A 390-amino-acid polypeptide reads, in one-letter code: Galactokinase (390 aa).

Substrate is bound at residue 33–36; it reads EHTD. Residues Ser67 and 124–130 contribute to the ATP site; that span reads GSGLSSS. Mg(2+) is bound by residues Ser130 and Glu162. Asp174 acts as the Proton acceptor in catalysis. Position 224 (Tyr224) interacts with substrate.

It belongs to the GHMP kinase family. GalK subfamily.

It is found in the cytoplasm. It carries out the reaction alpha-D-galactose + ATP = alpha-D-galactose 1-phosphate + ADP + H(+). Its pathway is carbohydrate metabolism; galactose metabolism. In terms of biological role, catalyzes the transfer of the gamma-phosphate of ATP to D-galactose to form alpha-D-galactose-1-phosphate (Gal-1-P). This Streptococcus mutans serotype c (strain ATCC 700610 / UA159) protein is Galactokinase.